The following is a 91-amino-acid chain: Cell division topological specificity factor (91 aa).

The protein belongs to the MinE family.

Functionally, prevents the cell division inhibition by proteins MinC and MinD at internal division sites while permitting inhibition at polar sites. This ensures cell division at the proper site by restricting the formation of a division septum at the midpoint of the long axis of the cell. In Bradyrhizobium sp. (strain BTAi1 / ATCC BAA-1182), this protein is Cell division topological specificity factor.